Reading from the N-terminus, the 118-residue chain is Non-specific lipid-transfer protein (118 aa).

Residues methionine 1–alanine 25 form the signal peptide. Cystine bridges form between cysteine 30-cysteine 76, cysteine 40-cysteine 53, cysteine 54-cysteine 98, and cysteine 74-cysteine 113.

The protein belongs to the plant LTP family.

In terms of biological role, plant non-specific lipid-transfer proteins transfer phospholipids as well as galactolipids across membranes. May play a role in wax or cutin deposition in the cell walls of expanding epidermal cells and certain secretory tissues. This chain is Non-specific lipid-transfer protein, found in Ambrosia artemisiifolia (Common ragweed).